The chain runs to 415 residues: Gamma-glutamyl phosphate reductase (415 aa).

Belongs to the gamma-glutamyl phosphate reductase family.

Its subcellular location is the cytoplasm. It catalyses the reaction L-glutamate 5-semialdehyde + phosphate + NADP(+) = L-glutamyl 5-phosphate + NADPH + H(+). It participates in amino-acid biosynthesis; L-proline biosynthesis; L-glutamate 5-semialdehyde from L-glutamate: step 2/2. Its function is as follows. Catalyzes the NADPH-dependent reduction of L-glutamate 5-phosphate into L-glutamate 5-semialdehyde and phosphate. The product spontaneously undergoes cyclization to form 1-pyrroline-5-carboxylate. This is Gamma-glutamyl phosphate reductase from Pseudoalteromonas translucida (strain TAC 125).